We begin with the raw amino-acid sequence, 507 residues long: ATP synthase subunit alpha (507 aa).

169–176 contacts ATP; sequence GDRQTGKT.

It belongs to the ATPase alpha/beta chains family. F-type ATPases have 2 components, CF(1) - the catalytic core - and CF(0) - the membrane proton channel. CF(1) has five subunits: alpha(3), beta(3), gamma(1), delta(1), epsilon(1). CF(0) has three main subunits: a(1), b(2) and c(9-12). The alpha and beta chains form an alternating ring which encloses part of the gamma chain. CF(1) is attached to CF(0) by a central stalk formed by the gamma and epsilon chains, while a peripheral stalk is formed by the delta and b chains.

Its subcellular location is the cell inner membrane. It catalyses the reaction ATP + H2O + 4 H(+)(in) = ADP + phosphate + 5 H(+)(out). Its function is as follows. Produces ATP from ADP in the presence of a proton gradient across the membrane. The alpha chain is a regulatory subunit. This Magnetococcus marinus (strain ATCC BAA-1437 / JCM 17883 / MC-1) protein is ATP synthase subunit alpha.